Consider the following 263-residue polypeptide: 3-deoxy-manno-octulosonate cytidylyltransferase 2 (263 aa).

The protein belongs to the KdsB family.

Its subcellular location is the cytoplasm. It catalyses the reaction 3-deoxy-alpha-D-manno-oct-2-ulosonate + CTP = CMP-3-deoxy-beta-D-manno-octulosonate + diphosphate. It functions in the pathway nucleotide-sugar biosynthesis; CMP-3-deoxy-D-manno-octulosonate biosynthesis; CMP-3-deoxy-D-manno-octulosonate from 3-deoxy-D-manno-octulosonate and CTP: step 1/1. It participates in bacterial outer membrane biogenesis; lipopolysaccharide biosynthesis. Its function is as follows. Activates KDO (a required 8-carbon sugar) for incorporation into bacterial lipopolysaccharide in Gram-negative bacteria. In Paraburkholderia phytofirmans (strain DSM 17436 / LMG 22146 / PsJN) (Burkholderia phytofirmans), this protein is 3-deoxy-manno-octulosonate cytidylyltransferase 2.